We begin with the raw amino-acid sequence, 253 residues long: 5'/3'-nucleotidase SurE (253 aa).

A divalent metal cation is bound by residues aspartate 8, aspartate 9, serine 39, and asparagine 92.

The protein belongs to the SurE nucleotidase family. A divalent metal cation serves as cofactor.

Its subcellular location is the cytoplasm. The enzyme catalyses a ribonucleoside 5'-phosphate + H2O = a ribonucleoside + phosphate. It catalyses the reaction a ribonucleoside 3'-phosphate + H2O = a ribonucleoside + phosphate. It carries out the reaction [phosphate](n) + H2O = [phosphate](n-1) + phosphate + H(+). Its function is as follows. Nucleotidase with a broad substrate specificity as it can dephosphorylate various ribo- and deoxyribonucleoside 5'-monophosphates and ribonucleoside 3'-monophosphates with highest affinity to 3'-AMP. Also hydrolyzes polyphosphate (exopolyphosphatase activity) with the preference for short-chain-length substrates (P20-25). Might be involved in the regulation of dNTP and NTP pools, and in the turnover of 3'-mononucleotides produced by numerous intracellular RNases (T1, T2, and F) during the degradation of various RNAs. The chain is 5'/3'-nucleotidase SurE from Shigella flexneri serotype 5b (strain 8401).